Reading from the N-terminus, the 90-residue chain is Conotoxin Rg9.1 (90 aa).

The N-terminal stretch at 1–20 (MHLSLARSAVLILLLLFALG) is a signal peptide. A propeptide spanning residues 21–60 (NFVGVQPGQITRDADHGINLRSLRKQMSRSPLVKGAFCGQ) is cleaved from the precursor. Intrachain disulfides connect Cys58/Cys71, Cys62/Cys73, and Cys67/Cys80.

Belongs to the conotoxin P superfamily. In terms of tissue distribution, expressed by the venom duct.

Its subcellular location is the secreted. Functionally, probable neurotoxin that inhibits ion channels. This is Conotoxin Rg9.1 from Conus regius (Crown cone).